The chain runs to 703 residues: WPP domain-interacting tail-anchored protein 1 (703 aa).

A compositionally biased stretch (basic and acidic residues) spans 1–12 (METETEHDRTVS). 2 disordered regions span residues 1–27 (METETEHDRTVSVDDNDSLVPEPSSTK) and 86–107 (FVSKKEEDEEEPSSNVDDDDDS). The span at 92 to 107 (EDEEEPSSNVDDDDDS) shows a compositional bias: acidic residues. Positions 118-183 (SSILNSEVKE…MEQVVEMKKQ (66 aa)) form a coiled coil. Positions 189-208 (RLSSGLDEQGSWSGGQTSVS) are disordered. Residues 198 to 208 (GSWSGGQTSVS) are compositionally biased toward polar residues. Coiled coils occupy residues 236 to 265 (LEKSLAKEMELEKKLSESRNTERELEMKLY), 318 to 461 (KRED…RDKG), and 500 to 604 (STVS…SREN). The chain crosses the membrane as a helical span at residues 679–699 (FKHILVAILVILISSIAYVIS).

In terms of assembly, homodimer. Component of Ran complexes at least composed of WIT1 or WIT2, RANGAP1 or RANGAP2, and WIP1 or WIP2 or WIP3. Interacts with WIP2, WPP1/MAF1, WPP2/MAF2, RANGAP1 and RANGAP2. Component of a ternary complex composed of WPP1, HSP70-1 and WIT1. Interacts with KAKU1. Interacts with WIP1. As to expression, ubiquitous.

It is found in the nucleus envelope. Its subcellular location is the nucleus membrane. Functionally, together with WIT2, required for the nuclear envelope docking of RANGAP proteins in root tips. The chain is WPP domain-interacting tail-anchored protein 1 (WIT1) from Arabidopsis thaliana (Mouse-ear cress).